Reading from the N-terminus, the 238-residue chain is 1-(5-phosphoribosyl)-5-[(5-phosphoribosylamino)methylideneamino] imidazole-4-carboxamide isomerase (238 aa).

Residue Asp-8 is the Proton acceptor of the active site. Catalysis depends on Asp-129, which acts as the Proton donor.

The protein belongs to the HisA/HisF family.

The protein resides in the cytoplasm. The enzyme catalyses 1-(5-phospho-beta-D-ribosyl)-5-[(5-phospho-beta-D-ribosylamino)methylideneamino]imidazole-4-carboxamide = 5-[(5-phospho-1-deoxy-D-ribulos-1-ylimino)methylamino]-1-(5-phospho-beta-D-ribosyl)imidazole-4-carboxamide. The protein operates within amino-acid biosynthesis; L-histidine biosynthesis; L-histidine from 5-phospho-alpha-D-ribose 1-diphosphate: step 4/9. In Paracoccus denitrificans (strain Pd 1222), this protein is 1-(5-phosphoribosyl)-5-[(5-phosphoribosylamino)methylideneamino] imidazole-4-carboxamide isomerase.